A 313-amino-acid polypeptide reads, in one-letter code: MKKQLIIGTRSSPLALWQAEFTKAELSRHFPDLEITLKLVKTTGDVLLDSPLSKIGDMGLFTKDIEKFLIAKEIDLAVHSLKDVPTATPEGLIISAFTEREDTRDVIISKTGAKLLDLPKNAKVATSSLRRMSQLKSLRPDFEICDIRGNLNTRFKKFDEGEFDAMMLAYAGVYRLNFSDRISEILPHEIMLPAVGQGALGIETRVDDEQTREIVKVMNHSTTEYCCKAERALLRHLQGGCQIPIGAYASFKNGTLHLLAFVGSTDGTIGIRDEITKTGLTSPSQAEEAGIELAKELLKQGAEKILSEIRKSC.

C241 carries the S-(dipyrrolylmethanemethyl)cysteine modification.

The protein belongs to the HMBS family. As to quaternary structure, monomer. Requires dipyrromethane as cofactor.

The catalysed reaction is 4 porphobilinogen + H2O = hydroxymethylbilane + 4 NH4(+). The protein operates within porphyrin-containing compound metabolism; protoporphyrin-IX biosynthesis; coproporphyrinogen-III from 5-aminolevulinate: step 2/4. It functions in the pathway porphyrin-containing compound metabolism; chlorophyll biosynthesis. Its function is as follows. Tetrapolymerization of the monopyrrole PBG into the hydroxymethylbilane pre-uroporphyrinogen in several discrete steps. The sequence is that of Porphobilinogen deaminase from Chlorobium luteolum (strain DSM 273 / BCRC 81028 / 2530) (Pelodictyon luteolum).